The sequence spans 617 residues: 1-deoxy-D-xylulose-5-phosphate synthase (617 aa).

Residues His77 and 118–120 (GHS) contribute to the thiamine diphosphate site. Asp149 contacts Mg(2+). Thiamine diphosphate-binding positions include 150-151 (GA), Asn178, Tyr286, and Glu367. Mg(2+) is bound at residue Asn178.

Belongs to the transketolase family. DXPS subfamily. Homodimer. Mg(2+) is required as a cofactor. Thiamine diphosphate serves as cofactor.

It catalyses the reaction D-glyceraldehyde 3-phosphate + pyruvate + H(+) = 1-deoxy-D-xylulose 5-phosphate + CO2. Its pathway is metabolic intermediate biosynthesis; 1-deoxy-D-xylulose 5-phosphate biosynthesis; 1-deoxy-D-xylulose 5-phosphate from D-glyceraldehyde 3-phosphate and pyruvate: step 1/1. Catalyzes the acyloin condensation reaction between C atoms 2 and 3 of pyruvate and glyceraldehyde 3-phosphate to yield 1-deoxy-D-xylulose-5-phosphate (DXP). The sequence is that of 1-deoxy-D-xylulose-5-phosphate synthase from Actinobacillus pleuropneumoniae serotype 5b (strain L20).